The sequence spans 254 residues: Proteasome activator complex subunit 3 (254 aa).

A2 bears the N-acetylalanine mark. 2 positions are modified to phosphoserine: S17 and S24. K195 is subject to N6-acetyllysine; by P300/CBP. A Phosphoserine; by CHEK2 modification is found at S247.

Belongs to the PA28 family. As to quaternary structure, homoheptamer; the stability of the heptamer is essential for the specific activation of the trypsine-like subunit and inhibition of the chymotrypsin-like and postglutamyl-preferring (PGPH) subunits of the proteasome. Interacts with p53/TP53, MDM2 and MAP3K3. Associates with the proteasome. Interacts with CCAR2. Interacts with PSME3IP1 (via C-terminus); the interaction is direct and promotes the association of PSME3 with the 20S proteasome. Interacts with COIL; the interaction is inhibited by PSME3IP1. Post-translationally, phosphorylated by MAP3K3. Phosphorylation at Ser-247 promotes its association with CCAR2. Acetylation at the major site Lys-195 is important for oligomerization and ability to degrade its target substrates. Deacetylated by SIRT1.

The protein resides in the nucleus. Its subcellular location is the cytoplasm. Its function is as follows. Subunit of the 11S REG-gamma (also called PA28-gamma) proteasome regulator, a doughnut-shaped homoheptamer which associates with the proteasome. 11S REG-gamma activates the trypsin-like catalytic subunit of the proteasome but inhibits the chymotrypsin-like and postglutamyl-preferring (PGPH) subunits. Facilitates the MDM2-p53/TP53 interaction which promotes ubiquitination- and MDM2-dependent proteasomal degradation of p53/TP53, limiting its accumulation and resulting in inhibited apoptosis after DNA damage. May also be involved in cell cycle regulation. Mediates CCAR2 and CHEK2-dependent SIRT1 inhibition. The protein is Proteasome activator complex subunit 3 (PSME3) of Pongo abelii (Sumatran orangutan).